Reading from the N-terminus, the 287-residue chain is Ribosomal RNA small subunit methyltransferase A (287 aa).

S-adenosyl-L-methionine contacts are provided by Asn-18, Leu-20, Gly-45, Glu-66, Asp-91, and Asn-118.

The protein belongs to the class I-like SAM-binding methyltransferase superfamily. rRNA adenine N(6)-methyltransferase family. RsmA subfamily.

It localises to the cytoplasm. The catalysed reaction is adenosine(1518)/adenosine(1519) in 16S rRNA + 4 S-adenosyl-L-methionine = N(6)-dimethyladenosine(1518)/N(6)-dimethyladenosine(1519) in 16S rRNA + 4 S-adenosyl-L-homocysteine + 4 H(+). In terms of biological role, specifically dimethylates two adjacent adenosines (A1518 and A1519) in the loop of a conserved hairpin near the 3'-end of 16S rRNA in the 30S particle. May play a critical role in biogenesis of 30S subunits. This chain is Ribosomal RNA small subunit methyltransferase A, found in Haemophilus influenzae (strain PittEE).